A 234-amino-acid chain; its full sequence is Ribosome-inactivating protein lychnin (234 aa).

Cys-32 and Cys-115 are oxidised to a cystine. The active site involves Glu-170.

As to quaternary structure, monomer.

It catalyses the reaction Endohydrolysis of the N-glycosidic bond at one specific adenosine on the 28S rRNA.. Functionally, ribosome-inactivating protein of type 1, inhibits protein synthesis in animal cells. Inhibits cell-free translation in rabbit reticulocyte lysate system with an IC(50) of 0.17 nM. The protein is Ribosome-inactivating protein lychnin of Silene chalcedonica (Maltese-cross).